A 107-amino-acid polypeptide reads, in one-letter code: Integration host factor subunit beta (107 aa).

A disordered region spans residues 55–107 (RRPARVGRNPKSGEKVQVPEKHVPHFKPGKELRERVDGRAGEPLKNDEPEDAQ). Residues 65 to 101 (KSGEKVQVPEKHVPHFKPGKELRERVDGRAGEPLKND) show a composition bias toward basic and acidic residues.

It belongs to the bacterial histone-like protein family. In terms of assembly, heterodimer of an alpha and a beta chain.

In terms of biological role, this protein is one of the two subunits of integration host factor, a specific DNA-binding protein that functions in genetic recombination as well as in transcriptional and translational control. This is Integration host factor subunit beta from Burkholderia pseudomallei (strain K96243).